Reading from the N-terminus, the 496-residue chain is Probable cytosol aminopeptidase (496 aa).

Residues Lys251 and Asp256 each contribute to the Mn(2+) site. Lys263 is a catalytic residue. The Mn(2+) site is built by Asp274, Asp333, and Glu335. The active site involves Arg337.

Belongs to the peptidase M17 family. It depends on Mn(2+) as a cofactor.

It is found in the cytoplasm. It catalyses the reaction Release of an N-terminal amino acid, Xaa-|-Yaa-, in which Xaa is preferably Leu, but may be other amino acids including Pro although not Arg or Lys, and Yaa may be Pro. Amino acid amides and methyl esters are also readily hydrolyzed, but rates on arylamides are exceedingly low.. The catalysed reaction is Release of an N-terminal amino acid, preferentially leucine, but not glutamic or aspartic acids.. Functionally, presumably involved in the processing and regular turnover of intracellular proteins. Catalyzes the removal of unsubstituted N-terminal amino acids from various peptides. The protein is Probable cytosol aminopeptidase of Acidovorax ebreus (strain TPSY) (Diaphorobacter sp. (strain TPSY)).